The primary structure comprises 441 residues: ATP-dependent protease ATPase subunit HslU (441 aa).

ATP is bound by residues Ile18, 60–65 (GVGKTE), Asp254, Glu319, and Arg391.

This sequence belongs to the ClpX chaperone family. HslU subfamily. A double ring-shaped homohexamer of HslV is capped on each side by a ring-shaped HslU homohexamer. The assembly of the HslU/HslV complex is dependent on binding of ATP.

The protein localises to the cytoplasm. ATPase subunit of a proteasome-like degradation complex; this subunit has chaperone activity. The binding of ATP and its subsequent hydrolysis by HslU are essential for unfolding of protein substrates subsequently hydrolyzed by HslV. HslU recognizes the N-terminal part of its protein substrates and unfolds these before they are guided to HslV for hydrolysis. This Actinobacillus succinogenes (strain ATCC 55618 / DSM 22257 / CCUG 43843 / 130Z) protein is ATP-dependent protease ATPase subunit HslU.